Reading from the N-terminus, the 205-residue chain is SREBP regulating gene protein (205 aa).

The Cytoplasmic segment spans residues 1–16 (MALYVSMVWRKILRKR). Residues 17–35 (WVLGVVFGLSLIYFLTSTF) form a helical membrane-spanning segment. Residues 36-205 (KQEERTVRDR…GESPPELLPI (170 aa)) lie on the Lumenal side of the membrane. N-linked (GlcNAc...) asparagine glycosylation occurs at Asn-67.

The protein belongs to the SPRING family.

It is found in the golgi apparatus membrane. In terms of biological role, positively regulates hepatic SREBP signaling pathway by modulating the proper localization of SCAP (SREBP cleavage-activating protein) to the endoplasmic reticulum, thereby controlling the level of functional SCAP. The sequence is that of SREBP regulating gene protein from Xenopus laevis (African clawed frog).